The following is a 525-amino-acid chain: Histidine-rich glycoprotein (525 aa).

Positions 1–18 (MKVLTTALLLVTLQCSHA) are cleaved as a signal peptide. One can recognise a Cystatin 1 domain in the interval 19–122 (LSPTNCDASE…ESQDLSVNGY (104 aa)). 5 disulfide bridges follow: Cys-24/Cys-504, Cys-78/Cys-89, Cys-103/Cys-124, Cys-201/Cys-414, and Cys-216/Cys-239. The interval 41–84 (GRRSGYVFELLRVSDAHLDRAGTATVYYLALDVIESDCWVLSTK) is interaction with ATP5F1A. 3 N-linked (GlcNAc...) asparagine glycosylation sites follow: Asn-112, Asn-123, and Asn-200. The 106-residue stretch at 135–240 (NTKDSPVLLD…TPDSIDINCE (106 aa)) folds into the Cystatin 2 domain. Positions 273 to 447 (GSRDHHHTHK…SRKRGPGKGL (175 aa)) are disordered. Residues 293–303 (EGKDNSDRPRL) are compositionally biased toward basic and acidic residues. Residues Asn-322 and Asn-330 are each glycosylated (N-linked (GlcNAc...) asparagine). Positions 339–404 (HGHRPHGHHP…GHHPHGHHPH (66 aa)) are enriched in basic residues. The necessary for endothelial cell focal adhesions and anti-angiogenic activities stretch occupies residues 345-379 (GHHPHSHHPPGHHSHGHHPHGHHPHSHHSHGHHPP). Ser-438 carries the post-translational modification Phosphoserine.

As to quaternary structure, interacts with THBS1 (via the TSP type I repeats); the interaction blocks the antiangiogenic effect of THBS1 with CD36. Interacts with HPSE; the interaction is enhanced at acidic pH, partially inhibits binding of HPSE to cell surface receptors and modulates its enzymatic activity. Interacts (via the HRR domain) with TMP1; the interaction partially mediates the antiangiogenic properties of HRG. Interacts with kappa and lambda light chains of IgG molecules. Interacts with ATP5F1A; the interaction occurs on the surface of T-cells and alters their cell morphology in concert with CONA. Binds IgG molecules containing kappa and lambda light chains and inhibits the formation of insoluble immunoglobulin complexes. Interacts with F12; the interaction, which is enhanced in the presence of zinc ions and inhibited by heparin-binding to HRG, inhibits factor XII autoactivation and contact-initiated coagulation. Interacts with PLG (via its Kringle domains); the interaction tethers PLG to the cell surface and enhances its activation. Interacts (via the HRR domain) with TPM1; the interaction appears to contribute to the antiangiogenic properties of the HRR domain. Interacts with THBS2; the interaction blocks the antiangiogenic effect of THBS2 with CD36. Requires Zn(2+) as cofactor. In terms of processing, proteolytic cleavage produces several HRG fragments which are mostly disulfide-linked and, therefore, not released. Cleavage by plasmin is inhibited in the presence of heparin, zinc ions or in an acidic environment. Cleavage reduces binding of HRG to heparan sulfate, but enhances the ability of HRG to bind and tether plasminogen to the cell surface. On platelet activation, releases a 33 kDa antiangiogenic peptide which encompasses the HRR. Also cleaved in the C-terminal by plasmin. N-glycosylated. Expressed in liver, blood plasma, serum and in platelets. Also present in fibrin clots, wound fluid from acute wounds and chronic leg ulcers.

It localises to the secreted. Its function is as follows. Plasma glycoprotein that binds a number of ligands such as heme, heparin, heparan sulfate, thrombospondin, plasminogen, and divalent metal ions. Binds heparin and heparin/glycosaminoglycans in a zinc-dependent manner. Binds heparan sulfate on the surface of liver, lung, kidney and heart endothelial cells. Binds to N-sulfated polysaccharide chains on the surface of liver endothelial cells. Inhibits rosette formation. Acts as an adapter protein and is implicated in regulating many processes such as immune complex and pathogen clearance, cell chemotaxis, cell adhesion, angiogenesis, coagulation and fibrinolysis. Mediates clearance of necrotic cells through enhancing the phagocytosis of necrotic cells in a heparan sulfate-dependent pathway. This process can be regulated by the presence of certain HRG ligands such as heparin and zinc ions. Binds to IgG subclasses of immunoglobins containing kappa and lambda light chains with different affinities regulating their clearance and inhibiting the formation of insoluble immune complexes. Tethers plasminogen to the cell surface. Binds T-cells and alters the cell morphology. Acts as a regulator of the vascular endothelial growth factor (VEGF) signaling pathway; inhibits endothelial cell motility by reducing VEGF-induced complex formation between PXN/paxillin and ILK/integrin-linked protein kinase and by promoting inhibition of VEGF-induced tyrosine phosphorylation of focal adhesion kinases and alpha-actinins in endothelial cells. Also plays a role in the regulation of tumor angiogenesis and tumor immune surveillance. Normalizes tumor vessels and promotes antitumor immunity by polarizing tumor-associated macrophages, leading to decreased tumor growth and metastasis. Modulates angiogenesis by blocking the CD6-mediated antiangiongenic effect of thrombospondins, THBS1 and THBS2. In Mus musculus (Mouse), this protein is Histidine-rich glycoprotein (Hrg).